The primary structure comprises 633 residues: Threonine--tRNA ligase (633 aa).

The editing domain stretch occupies residues 1 to 143; sequence MRALFLHSNR…SRTIKPKKVK (143 aa). 2 catalytic regions span residues 220–515 and 221–515; these read NPLN…PVLP and PLND…PVLP. Zn(2+) contacts are provided by Cys-314, His-365, and His-488.

This sequence belongs to the class-II aminoacyl-tRNA synthetase family. In terms of assembly, homodimer. Zn(2+) serves as cofactor.

The protein resides in the cytoplasm. It carries out the reaction tRNA(Thr) + L-threonine + ATP = L-threonyl-tRNA(Thr) + AMP + diphosphate + H(+). Functionally, catalyzes the attachment of threonine to tRNA(Thr) in a two-step reaction: L-threonine is first activated by ATP to form Thr-AMP and then transferred to the acceptor end of tRNA(Thr). Also edits incorrectly charged L-seryl-tRNA(Thr). The polypeptide is Threonine--tRNA ligase (Nanoarchaeum equitans (strain Kin4-M)).